Consider the following 105-residue polypeptide: Large ribosomal subunit protein uL22 (105 aa).

This sequence belongs to the universal ribosomal protein uL22 family. Part of the 50S ribosomal subunit.

Functionally, this protein binds specifically to 23S rRNA; its binding is stimulated by other ribosomal proteins, e.g. L4, L17, and L20. It is important during the early stages of 50S assembly. It makes multiple contacts with different domains of the 23S rRNA in the assembled 50S subunit and ribosome. In terms of biological role, the globular domain of the protein is located near the polypeptide exit tunnel on the outside of the subunit, while an extended beta-hairpin is found that lines the wall of the exit tunnel in the center of the 70S ribosome. The sequence is that of Large ribosomal subunit protein uL22 from Sulfurimonas denitrificans (strain ATCC 33889 / DSM 1251) (Thiomicrospira denitrificans (strain ATCC 33889 / DSM 1251)).